The sequence spans 211 residues: Large ribosomal subunit protein uL4 (211 aa).

Polar residues predominate over residues G46–M55. Positions G46–H89 are disordered.

This sequence belongs to the universal ribosomal protein uL4 family. Part of the 50S ribosomal subunit.

In terms of biological role, one of the primary rRNA binding proteins, this protein initially binds near the 5'-end of the 23S rRNA. It is important during the early stages of 50S assembly. It makes multiple contacts with different domains of the 23S rRNA in the assembled 50S subunit and ribosome. Its function is as follows. Forms part of the polypeptide exit tunnel. The sequence is that of Large ribosomal subunit protein uL4 from Leptospira interrogans serogroup Icterohaemorrhagiae serovar copenhageni (strain Fiocruz L1-130).